The following is a 1153-amino-acid chain: ATP-dependent helicase/deoxyribonuclease subunit B (1153 aa).

ATP is bound at residue 8 to 15 (GRAGSGKS). [4Fe-4S] cluster is bound by residues Cys-786, Cys-1104, Cys-1107, and Cys-1113.

It belongs to the helicase family. AddB/RexB type 1 subfamily. In terms of assembly, heterodimer of AddA and AddB. The cofactor is Mg(2+). [4Fe-4S] cluster serves as cofactor.

Its function is as follows. The heterodimer acts as both an ATP-dependent DNA helicase and an ATP-dependent, dual-direction single-stranded exonuclease. Recognizes the chi site generating a DNA molecule suitable for the initiation of homologous recombination. The AddB subunit has 5' -&gt; 3' nuclease activity but not helicase activity. This chain is ATP-dependent helicase/deoxyribonuclease subunit B, found in Clostridium acetobutylicum (strain ATCC 824 / DSM 792 / JCM 1419 / IAM 19013 / LMG 5710 / NBRC 13948 / NRRL B-527 / VKM B-1787 / 2291 / W).